The chain runs to 455 residues: Golgi pH regulator (455 aa).

Helical transmembrane passes span 5 to 25 (ADSV…WLFF) and 46 to 66 (VTFA…LGLL). N-linked (GlcNAc...) asparagine glycosylation occurs at Asn67. 3 helical membrane-spanning segments follow: residues 79-99 (LCVI…YFVV), 111-131 (LFSC…GDPF), and 150-170 (VGVI…VNCP). Residue Asn180 is glycosylated (N-linked (GlcNAc...) asparagine). 4 helical membrane passes run 290-310 (GYFF…NIVF), 343-363 (ISFI…LITL), 378-398 (VIVL…VLLI), and 425-445 (WFDV…YLAH).

It belongs to the Golgi pH regulator (TC 1.A.38) family. In terms of assembly, homotrimer.

It localises to the golgi apparatus membrane. It carries out the reaction iodide(out) = iodide(in). The enzyme catalyses chloride(in) = chloride(out). It catalyses the reaction bromide(in) = bromide(out). The catalysed reaction is fluoride(in) = fluoride(out). Voltage-gated channel that enables the transfer of anions such as iodide, chloride, bromide and fluoride which may function in counter-ion conductance and participates in Golgi acidification. In Xenopus laevis (African clawed frog), this protein is Golgi pH regulator (gpr89-b).